The sequence spans 361 residues: Neuronal-specific septin-3 (361 aa).

The disordered stretch occupies residues 1–46 (MSEIVPPEVRPKPAVPAKPSHVAPPSSAPFVPSPQGTGGEGQGSGR). Low complexity predominate over residues 15-34 (VPAKPSHVAPPSSAPFVPSP). Over residues 36–46 (GTGGEGQGSGR) the composition is skewed to gly residues. The 273-residue stretch at 70 to 342 (AGFDFNIMVV…ETYRAKRLND (273 aa)) folds into the Septin-type G domain. The tract at residues 80 to 87 (GQSGLGKS) is G1 motif. Residues 80–87 (GQSGLGKS) and T114 contribute to the GTP site. The G3 motif stretch occupies residues 137-140 (DTPG). The segment at 219 to 222 (AKSD) is G4 motif. GTP is bound by residues 220 to 228 (KSDTLTPEE), G276, and R291. The interval 341–361 (NDNGGLHPISSSGHDTQESNL) is disordered. Residues 349–361 (ISSSGHDTQESNL) show a composition bias toward polar residues.

It belongs to the TRAFAC class TrmE-Era-EngA-EngB-Septin-like GTPase superfamily. Septin GTPase family.

It localises to the cytoplasm. May be involved in cytokinesis. The sequence is that of Neuronal-specific septin-3 from Danio rerio (Zebrafish).